We begin with the raw amino-acid sequence, 169 residues long: Der GTPase-activating protein YihI (169 aa).

Disordered stretches follow at residues 1 to 75 (MKPS…IPLG) and 144 to 169 (GLSY…LRGN). Positions 10–19 (SKGHAKARRK) are enriched in basic residues. Basic and acidic residues predominate over residues 20-30 (TREELDQEARD). Positions 31–40 (RKRQKKRRGH) are enriched in basic residues. Polar residues predominate over residues 49–58 (GNTTSGSKGQ). Over residues 147-159 (YDDDEEEEEDEKQ) the composition is skewed to acidic residues. Basic and acidic residues predominate over residues 160-169 (EDMMRLLRGN).

The protein belongs to the YihI family. In terms of assembly, interacts with Der.

A GTPase-activating protein (GAP) that modifies Der/EngA GTPase function. May play a role in ribosome biogenesis. The chain is Der GTPase-activating protein YihI from Escherichia coli (strain 55989 / EAEC).